The sequence spans 1117 residues: ATP-dependent RNA helicase mtr4 (1117 aa).

Residues 19 to 86 (KSLKEESKNS…DNQDLIPNND (68 aa)) are disordered. Positions 65–79 (SATKRAKIENLKDNQ) are enriched in basic and acidic residues. One can recognise a Helicase ATP-binding domain in the interval 207-363 (IACIERQESV…WITKIHRQPC (157 aa)). Residue 220 to 227 (AHTSAGKT) participates in ATP binding. A DEIH box motif is present at residues 311–314 (DEIH). A disordered region spans residues 414-433 (GDDPAAMATKGNAKKGKTGK). The Helicase C-terminal domain occupies 441 to 642 (DIYKIVKMIM…LSYNMILNLL (202 aa)).

Belongs to the helicase family. SKI2 subfamily. Component of the TRAMP complex composed of at least cid14, mtr4, and air1.

Its subcellular location is the nucleus. In terms of biological role, component of the TRAMP complex which has a poly(A) RNA polymerase activity and is involved in a post-transcriptional quality control mechanism limiting inappropriate expression of genetic information. Polyadenylation is required for the degradative activity of the exosome on several of its nuclear RNA substrates. Required for heterochromatic gene silencing at centromeric repeats by either exosome- or RNAi-mediated degradation of heterochromatic transcripts. The polypeptide is ATP-dependent RNA helicase mtr4 (mtr4) (Schizosaccharomyces pombe (strain 972 / ATCC 24843) (Fission yeast)).